We begin with the raw amino-acid sequence, 219 residues long: Octanoyltransferase (219 aa).

One can recognise a BPL/LPL catalytic domain in the interval 31-219 (EDLPGFLVFC…KLKRRLLEVL (189 aa)). Substrate is bound by residues 69 to 76 (RGGRATYH), 153 to 155 (SVG), and 166 to 168 (GAA). Cys184 serves as the catalytic Acyl-thioester intermediate.

The protein belongs to the LipB family.

The protein localises to the cytoplasm. The catalysed reaction is octanoyl-[ACP] + L-lysyl-[protein] = N(6)-octanoyl-L-lysyl-[protein] + holo-[ACP] + H(+). It participates in protein modification; protein lipoylation via endogenous pathway; protein N(6)-(lipoyl)lysine from octanoyl-[acyl-carrier-protein]: step 1/2. Its function is as follows. Catalyzes the transfer of endogenously produced octanoic acid from octanoyl-acyl-carrier-protein onto the lipoyl domains of lipoate-dependent enzymes. Lipoyl-ACP can also act as a substrate although octanoyl-ACP is likely to be the physiological substrate. The polypeptide is Octanoyltransferase (Bdellovibrio bacteriovorus (strain ATCC 15356 / DSM 50701 / NCIMB 9529 / HD100)).